Consider the following 315-residue polypeptide: Pantothenate kinase (315 aa).

94–101 (GSVAVGKS) is an ATP binding site.

This sequence belongs to the prokaryotic pantothenate kinase family.

Its subcellular location is the cytoplasm. It catalyses the reaction (R)-pantothenate + ATP = (R)-4'-phosphopantothenate + ADP + H(+). The protein operates within cofactor biosynthesis; coenzyme A biosynthesis; CoA from (R)-pantothenate: step 1/5. The chain is Pantothenate kinase from Shewanella amazonensis (strain ATCC BAA-1098 / SB2B).